The primary structure comprises 288 residues: Pyridoxal kinase PdxY (288 aa).

Residues Ser12 and 47-48 contribute to the substrate site; that span reads TQ. Residues Asp114, Glu151, Lys184, and 211 to 214 contribute to the ATP site; that span reads RPLL. Substrate is bound at residue Asp225.

The protein belongs to the pyridoxine kinase family. PdxY subfamily. Homodimer. The cofactor is Mg(2+).

The enzyme catalyses pyridoxal + ATP = pyridoxal 5'-phosphate + ADP + H(+). Its pathway is cofactor metabolism; pyridoxal 5'-phosphate salvage; pyridoxal 5'-phosphate from pyridoxal: step 1/1. Pyridoxal kinase involved in the salvage pathway of pyridoxal 5'-phosphate (PLP). Catalyzes the phosphorylation of pyridoxal to PLP. The sequence is that of Pyridoxal kinase PdxY from Pseudomonas syringae pv. tomato (strain ATCC BAA-871 / DC3000).